The chain runs to 827 residues: Beta-galactosidase 1 (827 aa).

The first 25 residues, 1–25, serve as a signal peptide directing secretion; it reads MMGRRGSSWCRWWVALLVLAVAADA. Glu-187 functions as the Proton donor in the catalytic mechanism. N-linked (GlcNAc...) asparagine glycans are attached at residues Asn-198 and Asn-249. Glu-259 acts as the Nucleophile in catalysis. Residues Asn-260, Asn-366, Asn-392, Asn-502, Asn-520, Asn-578, Asn-586, and Asn-615 are each glycosylated (N-linked (GlcNAc...) asparagine). An SUEL-type lectin domain is found at 746–827; sequence GEAGDAVTLS…SGVLTVQATC (82 aa).

The protein belongs to the glycosyl hydrolase 35 family.

The protein resides in the secreted. It is found in the extracellular space. Its subcellular location is the apoplast. The enzyme catalyses Hydrolysis of terminal non-reducing beta-D-galactose residues in beta-D-galactosides.. In Oryza sativa subsp. japonica (Rice), this protein is Beta-galactosidase 1.